The chain runs to 312 residues: DNA-directed RNA polymerase subunit alpha (312 aa).

An alpha N-terminal domain (alpha-NTD) region spans residues 1-229; it reads MLQYQIDRIE…ELFQPLATVT (229 aa). The interval 246–312 is alpha C-terminal domain (alpha-CTD); that stretch reads IPLEELNLSV…ISIPQSRTSA (67 aa).

The protein belongs to the RNA polymerase alpha chain family. In terms of assembly, in cyanobacteria the RNAP catalytic core is composed of 2 alpha, 1 beta, 1 beta', 1 gamma and 1 omega subunit. When a sigma factor is associated with the core the holoenzyme is formed, which can initiate transcription.

It catalyses the reaction RNA(n) + a ribonucleoside 5'-triphosphate = RNA(n+1) + diphosphate. DNA-dependent RNA polymerase catalyzes the transcription of DNA into RNA using the four ribonucleoside triphosphates as substrates. The polypeptide is DNA-directed RNA polymerase subunit alpha (Parasynechococcus marenigrum (strain WH8102)).